Consider the following 284-residue polypeptide: Nucleotide-binding protein PputGB1_0956 (284 aa).

8–15 (GRSGSGKS) is an ATP binding site. GTP is bound at residue 60–63 (DARN).

It belongs to the RapZ-like family.

Functionally, displays ATPase and GTPase activities. The protein is Nucleotide-binding protein PputGB1_0956 of Pseudomonas putida (strain GB-1).